We begin with the raw amino-acid sequence, 107 residues long: Phosphoribosyl-ATP pyrophosphatase (107 aa).

This sequence belongs to the PRA-PH family.

The protein resides in the cytoplasm. The catalysed reaction is 1-(5-phospho-beta-D-ribosyl)-ATP + H2O = 1-(5-phospho-beta-D-ribosyl)-5'-AMP + diphosphate + H(+). The protein operates within amino-acid biosynthesis; L-histidine biosynthesis; L-histidine from 5-phospho-alpha-D-ribose 1-diphosphate: step 2/9. The polypeptide is Phosphoribosyl-ATP pyrophosphatase (Sinorhizobium fredii (strain NBRC 101917 / NGR234)).